The following is a 507-amino-acid chain: Beta-glucosidase 13 (507 aa).

The signal sequence occupies residues 1 to 22 (MRTKYFSLLVFIIVLASNEVIA). Gln50 is an a beta-D-glucoside binding site. Asn81 is a glycosylation site (N-linked (GlcNAc...) asparagine). A beta-D-glucoside is bound by residues His154 and 199 to 200 (NE). The active-site Proton donor is the Glu200. Cysteines 219 and 227 form a disulfide. Asn226 is a glycosylation site (N-linked (GlcNAc...) asparagine). Tyr344 provides a ligand contact to a beta-D-glucoside. An N-linked (GlcNAc...) asparagine glycan is attached at Asn358. Residues Glu414, Trp459, 466–467 (EW), and Phe475 contribute to the a beta-D-glucoside site. The active-site Nucleophile is Glu414.

The protein belongs to the glycosyl hydrolase 1 family.

It catalyses the reaction Hydrolysis of terminal, non-reducing beta-D-glucosyl residues with release of beta-D-glucose.. The sequence is that of Beta-glucosidase 13 from Arabidopsis thaliana (Mouse-ear cress).